The following is a 236-amino-acid chain: 7-cyano-7-deazaguanine synthase (236 aa).

7–17 (CSGGLDSVSLA) is a binding site for ATP. Residues Cys-185, Cys-193, Cys-196, and Cys-199 each coordinate Zn(2+).

This sequence belongs to the QueC family. Zn(2+) serves as cofactor.

It catalyses the reaction 7-carboxy-7-deazaguanine + NH4(+) + ATP = 7-cyano-7-deazaguanine + ADP + phosphate + H2O + H(+). The protein operates within purine metabolism; 7-cyano-7-deazaguanine biosynthesis. Functionally, catalyzes the ATP-dependent conversion of 7-carboxy-7-deazaguanine (CDG) to 7-cyano-7-deazaguanine (preQ(0)). This is 7-cyano-7-deazaguanine synthase from Rhizobium meliloti (strain 1021) (Ensifer meliloti).